The chain runs to 675 residues: Neurexin-3b-beta (675 aa).

Positions 1–30 (MRPHFKTRYPQWLSCMLPLVTGCVFGAVWG) are cleaved as a signal peptide. Residues 31–599 (SNLDSTVVLS…EVIRESSSTT (569 aa)) lie on the Extracellular side of the membrane. Positions 81-281 (ATYIFGKGGG…HANIKINGSV (201 aa)) constitute a Laminin G-like domain. Disordered regions lie at residues 313–337 (TTLS…DIVS) and 490–534 (FKPK…MNNR). Residues 325-335 (SPPTIQTTDDI) are compositionally biased toward polar residues. Residues 600 to 620 (GMVVGIVSAAALCILILLYAM) form a helical membrane-spanning segment. At 621–675 (YKYRNRDEGSYQVDETRNYISNSAQNNGTVVKDKQPSTKGASNKRPKDKDKEYYV) the chain is on the cytoplasmic side. The interval 642–675 (NSAQNNGTVVKDKQPSTKGASNKRPKDKDKEYYV) is disordered. Positions 665–675 (RPKDKDKEYYV) are enriched in basic and acidic residues.

Belongs to the neurexin family. Processed by alpha-secretase leading to the formation of an extracellular soluble protein as well as a C-terminal membrane-embedded fragment (CTF). Proteolysis of these CTFs by gamma-secretase releases intracellular domains (ICDs) and extracellular peptides.

Its subcellular location is the membrane. Neuronal cell surface protein that may be involved in cell recognition and cell adhesion. The sequence is that of Neurexin-3b-beta (nrxn3b) from Danio rerio (Zebrafish).